Here is a 337-residue protein sequence, read N- to C-terminus: Transcription factor HBI1 (337 aa).

Residues 119 to 180 (VALKNKRKPE…SKGASENQKL (62 aa)) form a disordered region. Residues 126–151 (KPEVKTREEQKTEKKIKVEAETESSM) are compositionally biased toward basic and acidic residues. Positions 152 to 165 (KGKSNMGNTEASSD) are enriched in polar residues. The bHLH domain occupies 191–241 (QATDRHSLAERARREKISKKMKYLQDIVPGCNKVTGKAGMLDEIINYVQCL).

Homodimer. Interacts with IBH1. As to expression, highly expressed in hypocotyls and cotyledons. Expressed in leaves, stems, and flowers.

Its subcellular location is the nucleus. Atypical bHLH transcription factor that acts as a positive regulator of cell elongation downstream of multiple external and endogenous signals by direct binding to the promoters and activation of the two expansin genes EXPA1 and EXPA8, encoding cell wall loosening enzymes. Transcriptional activity is inhibited when binding to the bHLH transcription factor IBH1. This Arabidopsis thaliana (Mouse-ear cress) protein is Transcription factor HBI1 (HBI1).